Reading from the N-terminus, the 25-residue chain is Dermaseptin-5.2TR (25 aa).

Valine amide is present on Val-25.

In terms of tissue distribution, expressed by the skin glands.

The protein localises to the secreted. Functionally, has antimicrobial activity. This is Dermaseptin-5.2TR from Phyllomedusa trinitatis (Trinidad leaf frog).